The sequence spans 329 residues: 4-hydroxythreonine-4-phosphate dehydrogenase (329 aa).

Histidine 136 and threonine 137 together coordinate substrate. 3 residues coordinate a divalent metal cation: histidine 166, histidine 211, and histidine 266. Residues lysine 274, asparagine 283, and arginine 292 each coordinate substrate.

Belongs to the PdxA family. As to quaternary structure, homodimer. Zn(2+) serves as cofactor. Requires Mg(2+) as cofactor. The cofactor is Co(2+).

The protein localises to the cytoplasm. It catalyses the reaction 4-(phosphooxy)-L-threonine + NAD(+) = 3-amino-2-oxopropyl phosphate + CO2 + NADH. Its pathway is cofactor biosynthesis; pyridoxine 5'-phosphate biosynthesis; pyridoxine 5'-phosphate from D-erythrose 4-phosphate: step 4/5. Catalyzes the NAD(P)-dependent oxidation of 4-(phosphooxy)-L-threonine (HTP) into 2-amino-3-oxo-4-(phosphooxy)butyric acid which spontaneously decarboxylates to form 3-amino-2-oxopropyl phosphate (AHAP). This chain is 4-hydroxythreonine-4-phosphate dehydrogenase, found in Escherichia coli O6:H1 (strain CFT073 / ATCC 700928 / UPEC).